The following is a 335-amino-acid chain: tRNA N6-adenosine threonylcarbamoyltransferase (335 aa).

A divalent metal cation-binding residues include His-109, His-113, and Tyr-130. Substrate contacts are provided by residues 130-134, Asp-162, Gly-177, Glu-181, and Asn-266; that span reads YVSGG. Asp-294 is an a divalent metal cation binding site.

Belongs to the KAE1 / TsaD family. As to quaternary structure, component of the EKC/KEOPS complex composed of at least tp53rk, tprkb, osgep and lage3; the whole complex dimerizes. A divalent metal cation is required as a cofactor.

Its subcellular location is the cytoplasm. The protein resides in the nucleus. The enzyme catalyses L-threonylcarbamoyladenylate + adenosine(37) in tRNA = N(6)-L-threonylcarbamoyladenosine(37) in tRNA + AMP + H(+). Functionally, component of the EKC/KEOPS complex that is required for the formation of a threonylcarbamoyl group on adenosine at position 37 (t(6)A37) in tRNAs that read codons beginning with adenine. The complex is probably involved in the transfer of the threonylcarbamoyl moiety of threonylcarbamoyl-AMP (TC-AMP) to the N6 group of A37. Osgep likely plays a direct catalytic role in this reaction, but requires other protein(s) of the complex to fulfill this activity. The chain is tRNA N6-adenosine threonylcarbamoyltransferase from Xenopus laevis (African clawed frog).